We begin with the raw amino-acid sequence, 287 residues long: uncharacterized protein (287 aa).

A run of 2 helical transmembrane segments spans residues 12 to 32 and 217 to 237; these read IILL…GAAL and YTIG…VLIV.

The protein localises to the cell membrane. This is an uncharacterized protein from Mycoplasma pneumoniae (strain ATCC 29342 / M129 / Subtype 1) (Mycoplasmoides pneumoniae).